The primary structure comprises 314 residues: MISLRQHAVSLAAVFLALAMGVVLGSGFFSDTLLSSLRSEKRDLYTQIDRLTDQRDALREKLSAADNFDIQVGSRIVHDALVGKSVVIFRTPDAHDDDIAAVSKIVGQAGGAVTATVSLTQEFVEANSAEKLRSVVNSSILPAGSQLSTKLVDQGSQAGDLLGIALLSNADPAAPTVEQAQRDTVLAALRETGFITYQPRDRIGTANATVVVTGGALSTDAGNQGVSVARFAAALAPRGSGTLLAGRDGSANRPAAVAVTRADADMAAEISTVDDIDAEPGRITVILALHDLINGGHVGHYGTGHGAMSVTVSQ.

Positions Met1–Ser30 are cleaved as a signal peptide.

The protein belongs to the MctB (TC 1.B.50) family.

It localises to the cell outer membrane. Its function is as follows. Pore-forming protein, which is involved in efflux of copper across the outer membrane. Essential for copper resistance and maintenance of a low intracellular copper concentration. The polypeptide is Copper transporter MctB (mctB) (Mycobacterium bovis (strain ATCC BAA-935 / AF2122/97)).